Here is a 586-residue protein sequence, read N- to C-terminus: MVTTTLPDFKSHCIQLLDQAARQVLPDEVGVQIELLRPKLADHGDYSSNLAMKLARRLRRNPLELAKALIGALPDSSCVEKADVAGGGFINFFLKKTAKQQFLHAVLQAGDSFGHSRLGAGKTIQIEFVSANPTGPLHVGHGRGAAFGASLANIMTAAGYAVTREFYVNDAGRQMDILTLSTWLRYLDLCGLSFSFPANAYRGQYVADMASEIYQAQGDRYAHRSDATIRQLTEISTSTTIDSEDERLDRLITAAKSILDQDYADLHNFVLTEQLADCRNDLMEFGVEFETWFSEQSLFDSGMVARAVQLLDDKKLLYRQDGALWFRSTDFGDEKDRVVQRENGLYTYFASDIAYHLSKYERGFDYLLNIWGADHHGYIPRVKGAIEALSLDPGRLEIALVQFAVLYRDGKKVSMSTRSGEFVTLRQLRQEVGNDAARFFYVLRKSDQHLDFDLDLAKSQSNDNPVYYVQYAHARICSVLGQWGGAEDILARAETELLTDPAELVLLQKMIDFTDTIEAAAKERAPHLIAFFLRELAGEFHSYYNSTRFLVEDESLKITRLALISAVRQILSKGLTLLGVTAPREM.

A 'HIGH' region motif is present at residues Ala-131–His-141.

This sequence belongs to the class-I aminoacyl-tRNA synthetase family. As to quaternary structure, monomer.

Its subcellular location is the cytoplasm. It carries out the reaction tRNA(Arg) + L-arginine + ATP = L-arginyl-tRNA(Arg) + AMP + diphosphate. This Nitrosomonas europaea (strain ATCC 19718 / CIP 103999 / KCTC 2705 / NBRC 14298) protein is Arginine--tRNA ligase.